A 338-amino-acid chain; its full sequence is Fructose-1,6-bisphosphatase class 1 1 (338 aa).

Mg(2+) is bound by residues glutamate 88, aspartate 107, leucine 109, and aspartate 110. Substrate contacts are provided by residues 110–113 (DGSS) and asparagine 196. Glutamate 268 is a binding site for Mg(2+).

It belongs to the FBPase class 1 family. As to quaternary structure, homotetramer. Mg(2+) is required as a cofactor.

It localises to the cytoplasm. It catalyses the reaction beta-D-fructose 1,6-bisphosphate + H2O = beta-D-fructose 6-phosphate + phosphate. The protein operates within carbohydrate biosynthesis; Calvin cycle. This Bradyrhizobium sp. (strain BTAi1 / ATCC BAA-1182) protein is Fructose-1,6-bisphosphatase class 1 1.